A 486-amino-acid polypeptide reads, in one-letter code: N-succinylglutamate 5-semialdehyde dehydrogenase (486 aa).

Gly-221–Gly-226 provides a ligand contact to NAD(+). Residues Glu-244 and Cys-278 contribute to the active site.

Belongs to the aldehyde dehydrogenase family. AstD subfamily.

It carries out the reaction N-succinyl-L-glutamate 5-semialdehyde + NAD(+) + H2O = N-succinyl-L-glutamate + NADH + 2 H(+). It participates in amino-acid degradation; L-arginine degradation via AST pathway; L-glutamate and succinate from L-arginine: step 4/5. In terms of biological role, catalyzes the NAD-dependent reduction of succinylglutamate semialdehyde into succinylglutamate. The polypeptide is N-succinylglutamate 5-semialdehyde dehydrogenase (Chromobacterium violaceum (strain ATCC 12472 / DSM 30191 / JCM 1249 / CCUG 213 / NBRC 12614 / NCIMB 9131 / NCTC 9757 / MK)).